We begin with the raw amino-acid sequence, 583 residues long: Glucosidase 2 subunit beta (583 aa).

The first 26 residues, 1-26, serve as a signal peptide directing secretion; the sequence is MVRLNLAVVALAAGALSASASASSSA. Cys-91 and Cys-115 are joined by a disulfide. Residues 130–252 are a coiled coil; the sequence is NRCEKVGKEY…LTLLLDDLAK (123 aa). An MRH domain is found at 455–562; sequence NKCFSKDMGE…KVATPAVCFP (108 aa). 3 disulfides stabilise this stretch: Cys-457–Cys-470, Cys-519–Cys-548, and Cys-533–Cys-560. The Prevents secretion from ER signature appears at 580 to 583; sequence KDEL.

In terms of assembly, heterodimer of a catalytic subunit alpha and a subunit beta.

The protein resides in the endoplasmic reticulum. Subunit of glucosidase 2, which cleaves sequentially the 2 innermost alpha-1,3-linked glucose residues from the Glc(2)Man(9)GlcNAc(2) oligosaccharide precursor of immature glycoproteins in the endoplasmic reticulum (ER). Specifically required for the cleavage of the final glucose. The subunit beta retains the catalytic subunit alpha in the ER. The polypeptide is Glucosidase 2 subunit beta (Mycosarcoma maydis (Corn smut fungus)).